Here is a 432-residue protein sequence, read N- to C-terminus: UDP-N-acetylglucosamine 1-carboxyvinyltransferase (432 aa).

22 to 23 (KN) serves as a coordination point for phosphoenolpyruvate. Arg92 serves as a coordination point for UDP-N-acetyl-alpha-D-glucosamine. Cys116 serves as the catalytic Proton donor. Cys116 carries the 2-(S-cysteinyl)pyruvic acid O-phosphothioketal modification. Residues 121 to 125 (RPVDQ), Asp307, and Ile329 each bind UDP-N-acetyl-alpha-D-glucosamine.

This sequence belongs to the EPSP synthase family. MurA subfamily.

The protein localises to the cytoplasm. It catalyses the reaction phosphoenolpyruvate + UDP-N-acetyl-alpha-D-glucosamine = UDP-N-acetyl-3-O-(1-carboxyvinyl)-alpha-D-glucosamine + phosphate. The protein operates within cell wall biogenesis; peptidoglycan biosynthesis. In terms of biological role, cell wall formation. Adds enolpyruvyl to UDP-N-acetylglucosamine. In Psychrobacter sp. (strain PRwf-1), this protein is UDP-N-acetylglucosamine 1-carboxyvinyltransferase.